A 474-amino-acid chain; its full sequence is 4-aminobutyrate aminotransferase (474 aa).

Over residues 1–13 the composition is skewed to polar residues; sequence MSSTATVTESTHF. The segment at 1–31 is disordered; sequence MSSTATVTESTHFFPNEPQGPSIKTETIPGP. 142–143 contributes to the pyridoxal 5'-phosphate binding site; the sequence is GS. R199 is a binding site for substrate. At K333 the chain carries N6-(pyridoxal phosphate)lysine. Position 357 (T357) interacts with pyridoxal 5'-phosphate.

Belongs to the class-III pyridoxal-phosphate-dependent aminotransferase family. In terms of assembly, homodimer. Pyridoxal 5'-phosphate serves as cofactor.

The protein localises to the cytoplasm. The catalysed reaction is 4-aminobutanoate + 2-oxoglutarate = succinate semialdehyde + L-glutamate. Functionally, required for the degradation of gamma-aminobutyric acid (GABA), which is important for utilization of GABA as nitrogen source. Deaminates GABA to succinate-semialdehyde, which in turn is converted to succinate by the succinate semialdehyde dehydrogenase. Cannot transaminate beta-alanine (BAL). This Schizosaccharomyces pombe (strain 972 / ATCC 24843) (Fission yeast) protein is 4-aminobutyrate aminotransferase (uga1).